The sequence spans 187 residues: GTP cyclohydrolase 1 (187 aa).

Zn(2+) is bound by residues C76, H79, and C148.

Belongs to the GTP cyclohydrolase I family. As to quaternary structure, toroid-shaped homodecamer, composed of two pentamers of five dimers.

The enzyme catalyses GTP + H2O = 7,8-dihydroneopterin 3'-triphosphate + formate + H(+). It participates in cofactor biosynthesis; 7,8-dihydroneopterin triphosphate biosynthesis; 7,8-dihydroneopterin triphosphate from GTP: step 1/1. The sequence is that of GTP cyclohydrolase 1 from Streptococcus agalactiae serotype III (strain NEM316).